We begin with the raw amino-acid sequence, 812 residues long: Probable beta-glucosidase D (812 aa).

The N-terminal stretch at 1 to 18 (MRVPSLSVLSFLLGTALA) is a signal peptide. N-linked (GlcNAc...) asparagine glycosylation is found at asparagine 53 and asparagine 188. The tract at residues 186 to 248 (ETNRTGGMGG…GMGGGMAGSS (63 aa)) is disordered. Gly residues predominate over residues 191-207 (GGMGGGGGAPGGGGMGR). Residues 211-225 (FSSSVPGGMSPTSSA) are compositionally biased toward polar residues. Over residues 236 to 245 (GGSGMGGGMA) the composition is skewed to gly residues. The N-linked (GlcNAc...) asparagine glycan is linked to asparagine 296. Residue aspartate 324 is part of the active site. 6 N-linked (GlcNAc...) asparagine glycosylation sites follow: asparagine 360, asparagine 384, asparagine 422, asparagine 501, asparagine 592, and asparagine 646.

Belongs to the glycosyl hydrolase 3 family.

The protein resides in the secreted. It catalyses the reaction Hydrolysis of terminal, non-reducing beta-D-glucosyl residues with release of beta-D-glucose.. It functions in the pathway glycan metabolism; cellulose degradation. Functionally, beta-glucosidases are one of a number of cellulolytic enzymes involved in the degradation of cellulosic biomass. Catalyzes the last step releasing glucose from the inhibitory cellobiose. The protein is Probable beta-glucosidase D (bglD) of Emericella nidulans (strain FGSC A4 / ATCC 38163 / CBS 112.46 / NRRL 194 / M139) (Aspergillus nidulans).